A 197-amino-acid chain; its full sequence is Adenylate kinase (197 aa).

19–24 (GSGKGT) serves as a coordination point for ATP. Residues 39–68 (SSGDLLRAEVQSGSPKGKELKAMMERGELV) form an NMP region. AMP-binding positions include Ser-40, Arg-45, 66 to 68 (ELV), 95 to 98 (RYPR), and Gln-102. Residues 132–142 (KRAETSNRVDD) are LID. ATP is bound at residue Arg-133. AMP-binding residues include Arg-139 and Arg-150. Position 178 (Gly-178) interacts with ATP.

It belongs to the adenylate kinase family. As to quaternary structure, monomer.

Its subcellular location is the cytoplasm. The catalysed reaction is AMP + ATP = 2 ADP. Catalyzes the reversible transfer of the terminal phosphate group between ATP and AMP. Plays an important role in cellular energy homeostasis and in adenine nucleotide metabolism. The chain is Adenylate kinase from Schistosoma mansoni (Blood fluke).